The following is a 34-amino-acid chain: Toxin Ptu1 (34 aa).

3 disulfides stabilise this stretch: Cys-5–Cys-20, Cys-12–Cys-26, and Cys-19–Cys-33.

It localises to the secreted. In terms of biological role, binds reversibly and blocks N-type voltage-gated calcium channels (Cav). In Peirates turpis (Assassin bug), this protein is Toxin Ptu1.